The following is a 334-amino-acid chain: GTP 3',8-cyclase (334 aa).

A Radical SAM core domain is found at 13–239; the sequence is KFHRKFYYLR…KVRSHHDGPA (227 aa). Arginine 22 is a binding site for GTP. Residues cysteine 29 and cysteine 33 each coordinate [4Fe-4S] cluster. An S-adenosyl-L-methionine-binding site is contributed by tyrosine 35. Cysteine 36 provides a ligand contact to [4Fe-4S] cluster. Residue arginine 73 coordinates GTP. Residue glycine 77 coordinates S-adenosyl-L-methionine. Threonine 104 contacts GTP. Serine 128 is a binding site for S-adenosyl-L-methionine. Residue lysine 165 coordinates GTP. Methionine 199 serves as a coordination point for S-adenosyl-L-methionine. Residues cysteine 262 and cysteine 265 each coordinate [4Fe-4S] cluster. 267 to 269 lines the GTP pocket; that stretch reads RLR. [4Fe-4S] cluster is bound at residue cysteine 279.

This sequence belongs to the radical SAM superfamily. MoaA family. As to quaternary structure, monomer and homodimer. Requires [4Fe-4S] cluster as cofactor.

The enzyme catalyses GTP + AH2 + S-adenosyl-L-methionine = (8S)-3',8-cyclo-7,8-dihydroguanosine 5'-triphosphate + 5'-deoxyadenosine + L-methionine + A + H(+). It functions in the pathway cofactor biosynthesis; molybdopterin biosynthesis. Its function is as follows. Catalyzes the cyclization of GTP to (8S)-3',8-cyclo-7,8-dihydroguanosine 5'-triphosphate. In Vibrio parahaemolyticus serotype O3:K6 (strain RIMD 2210633), this protein is GTP 3',8-cyclase.